The sequence spans 554 residues: Raftlin (554 aa).

G2 is lipidated: N-myristoyl glycine. C3 carries the S-palmitoyl cysteine lipid modification. Phosphoserine occurs at positions 183 and 199. Disordered regions lie at residues 192 to 249, 441 to 488, and 504 to 554; these read CTLG…NEAG, KKRE…DQFS, and GRAS…TEAN. Composition is skewed to basic and acidic residues over residues 198–209 and 475–487; these read SSLENDTPKAAE and QAEE…EDQF. A phosphoserine mark is found at S507 and S530. Residues 526-542 are compositionally biased toward basic and acidic residues; that stretch reads HNRDSVALRHSNPRAEA.

It belongs to the raftlin family. Interacts with TLR4; the interaction occurs in response to lipopolysaccharide stimulation. Interacts with CLTC; the interaction occurs in response to pathogens. Interacts with AP2A1 and AP2B1. As to expression, expressed in T-cells, B-cells, thymus and spleen (at protein level). Expressed in dendritic cells, macrophages, heart, lung and small intestine.

The protein localises to the cell membrane. Its subcellular location is the cytoplasm. The protein resides in the membrane raft. It is found in the endosome. It localises to the early endosome. Involved in protein trafficking via association with clathrin and AP2 complex. Upon bacterial lipopolysaccharide stimulation, mediates internalization of TLR4 to endosomes in dendritic cells and macrophages, and internalization of poly(I:C) to TLR3-positive endosomes in myeloid dendritic cells and epithelial cells; resulting in activation of TICAM1-mediated signaling and subsequent IFNB1 production. Involved in T-cell antigen receptor-mediated signaling by regulating tyrosine kinase LCK localization, T-cell dependent antibody production and cytokine secretion. May regulate B-cell antigen receptor-mediated signaling. May play a pivotal role in the formation and/or maintenance of lipid rafts. The polypeptide is Raftlin (Rftn1) (Mus musculus (Mouse)).